A 131-amino-acid chain; its full sequence is Large ribosomal subunit protein bL17 (131 aa).

The protein belongs to the bacterial ribosomal protein bL17 family. As to quaternary structure, part of the 50S ribosomal subunit. Contacts protein L32.

The protein is Large ribosomal subunit protein bL17 of Cupriavidus necator (strain ATCC 17699 / DSM 428 / KCTC 22496 / NCIMB 10442 / H16 / Stanier 337) (Ralstonia eutropha).